Here is a 301-residue protein sequence, read N- to C-terminus: 4-hydroxy-tetrahydrodipicolinate synthase (301 aa).

Pyruvate is bound at residue T50. Y138 functions as the Proton donor/acceptor in the catalytic mechanism. K167 serves as the catalytic Schiff-base intermediate with substrate. I209 serves as a coordination point for pyruvate.

Belongs to the DapA family. In terms of assembly, homotetramer; dimer of dimers.

It is found in the cytoplasm. The catalysed reaction is L-aspartate 4-semialdehyde + pyruvate = (2S,4S)-4-hydroxy-2,3,4,5-tetrahydrodipicolinate + H2O + H(+). Its pathway is amino-acid biosynthesis; L-lysine biosynthesis via DAP pathway; (S)-tetrahydrodipicolinate from L-aspartate: step 3/4. In terms of biological role, catalyzes the condensation of (S)-aspartate-beta-semialdehyde [(S)-ASA] and pyruvate to 4-hydroxy-tetrahydrodipicolinate (HTPA). The chain is 4-hydroxy-tetrahydrodipicolinate synthase from Sorangium cellulosum (strain So ce56) (Polyangium cellulosum (strain So ce56)).